A 410-amino-acid polypeptide reads, in one-letter code: Multidrug resistance protein MdtA (410 aa).

Positions 1–21 (MNNRYPVMKKGLIVLVVIAVA) are cleaved as a signal peptide. Positions 36-56 (SDGDLSGQSAHGKRGNGAHKP) are disordered.

It belongs to the membrane fusion protein (MFP) (TC 8.A.1) family. In terms of assembly, part of a tripartite efflux system composed of MdtA, MdtB and MdtC.

It localises to the cell inner membrane. This Pantoea ananatis (strain AJ13355) protein is Multidrug resistance protein MdtA.